The chain runs to 143 residues: Large ribosomal subunit protein uL11 (143 aa).

The protein belongs to the universal ribosomal protein uL11 family. In terms of assembly, part of the ribosomal stalk of the 50S ribosomal subunit. Interacts with L10 and the large rRNA to form the base of the stalk. L10 forms an elongated spine to which L12 dimers bind in a sequential fashion forming a multimeric L10(L12)X complex. Post-translationally, one or more lysine residues are methylated.

Forms part of the ribosomal stalk which helps the ribosome interact with GTP-bound translation factors. The sequence is that of Large ribosomal subunit protein uL11 from Leifsonia xyli subsp. xyli (strain CTCB07).